A 192-amino-acid polypeptide reads, in one-letter code: Large ribosomal subunit protein uL6 (192 aa).

This sequence belongs to the universal ribosomal protein uL6 family. As to quaternary structure, component of the large ribosomal subunit.

Its subcellular location is the cytoplasm. In terms of biological role, component of the large ribosomal subunit. The ribosome is a large ribonucleoprotein complex responsible for the synthesis of proteins in the cell. This Ictalurus punctatus (Channel catfish) protein is Large ribosomal subunit protein uL6 (rpl9).